A 123-amino-acid polypeptide reads, in one-letter code: Large ribosomal subunit protein eL8 (123 aa).

It belongs to the eukaryotic ribosomal protein eL8 family. As to quaternary structure, part of the 50S ribosomal subunit. Probably part of the RNase P complex.

It is found in the cytoplasm. Functionally, multifunctional RNA-binding protein that recognizes the K-turn motif in ribosomal RNA, the RNA component of RNase P, box H/ACA, box C/D and box C'/D' sRNAs. The chain is Large ribosomal subunit protein eL8 from Methanopyrus kandleri (strain AV19 / DSM 6324 / JCM 9639 / NBRC 100938).